We begin with the raw amino-acid sequence, 342 residues long: Alpha-tocopherol transfer protein-like (342 aa).

The segment at 1–31 is disordered; it reads MSEESDSLRTSPSVASLSENELPPPPEPPGY. The segment covering 8–19 has biased composition (polar residues); it reads LRTSPSVASLSE. Residues 117–282 form the CRAL-TRIO domain; the sequence is KPSALKDVLA…EYGGTAGELD (166 aa).

May act as a protein that binds a hydrophobic ligand. The polypeptide is Alpha-tocopherol transfer protein-like (TTPAL) (Pongo abelii (Sumatran orangutan)).